The chain runs to 435 residues: Astacin-like metalloendopeptidase (435 aa).

An N-terminal signal peptide occupies residues 1-23; sequence MGIMGSLWPWILTMLSLLGLSMG. The Peptidase M12A domain occupies 85–282; sequence RLLSVTNNKW…TRVCRLYNCS (198 aa). 2 disulfides stabilise this stretch: C132–C281 and C153–C172. H182 contacts Zn(2+). The active site involves E183. Residues H186 and H192 each coordinate Zn(2+). The span at 318 to 329 shows a compositional bias: low complexity; sequence SEESGSSAPSGS. The interval 318–356 is disordered; sequence SEESGSSAPSGSRTGGQSIAGLGNSQQGWEHPPQSTFSV. Polar residues predominate over residues 340–355; it reads GNSQQGWEHPPQSTFS.

As to quaternary structure, interacts (via N-terminal domain) with SPACA3; the interaction occurs during fertilization. Requires Zn(2+) as cofactor. In terms of tissue distribution, ovary-specific. Expressed in secondary, antral and Graafian follicle oocytes. Expressed in the egg cells. Not detected in two-cell embryos. Not detected in naked oocytes, oocytes in primordial or unilaminar primary follicles, or in any other ovarian cells at pre-pubertal, pubertal or adult stages (at protein level). Ovary-specific.

It localises to the cytoplasm. The protein localises to the cell membrane. The protein resides in the cytoplasmic vesicle. Its subcellular location is the secretory vesicle. It is found in the cortical granule. With respect to regulation, inhibited by wide spectrum metalloproteinase inhibitor batimastat (BB-94). Also inhibited by EDTA. Oocyte-specific oolemmal receptor involved in sperm and egg adhesion and fertilization. Plays a role in the polyspermy inhibition. Probably acts as a protease for the post-fertilization cleavage of ZP2. Cleaves the sperm-binding ZP2 at the surface of the zona pellucida after fertilization and cortical granule exocytosis, rendering the zona pellucida unable to support further sperm binding. This Mus musculus (Mouse) protein is Astacin-like metalloendopeptidase.